We begin with the raw amino-acid sequence, 239 residues long: MADS-box transcription factor 34 (239 aa).

An MADS-box domain is found at 1 to 61 (MGRGKVVLQR…GRLYQFSSSS (61 aa)). A K-box domain is found at 88–178 (MQNNYQEYVN…KRKLDEIDVE (91 aa)). A disordered region spans residues 179 to 208 (AAPPQPPWNGNCSNGHGGGGGVFSSEPPQP).

As to expression, highly expressed in leaves and at low levels in roots and spikelets (rice flower).

It localises to the nucleus. Probable transcription factor. The chain is MADS-box transcription factor 34 (MADS34) from Oryza sativa subsp. japonica (Rice).